The sequence spans 594 residues: Neuronal PAS domain-containing protein 1 (594 aa).

The region spanning 45–98 is the bHLH domain; that stretch reads QRKEKSRNAARWRRGKENLEFFELAKLLPLPGAISSQLDKASIVRLSVTYLRLR. The PAS 1 domain occupies 135-205; sequence EQHLGGHILQ…EQLGLRAASI (71 aa). Residues 206 to 237 form a disordered region; it reads GPPTPPSVSSSSSSSSSSLVDTPEIEASPTEA. A compositionally biased stretch (low complexity) spans 212–223; the sequence is SVSSSSSSSSSS. In terms of domain architecture, PAS 2 spans 294–360; the sequence is APLAELPLHG…IRQSHLDLLD (67 aa). Residues 366–409 form the PAC domain; the sequence is TGYYRWLQRAGGFVWLQSVATVAGNGKSTGEHHVLWVSHVLSNA. A disordered region spans residues 427–498; it reads QEEPSRPGPE…DPPAPPRPEF (72 aa). Positions 453–480 are enriched in basic and acidic residues; sequence DQDKDKDPQARGKRIKVEASPKEARGSE.

In terms of assembly, efficient DNA binding requires dimerization with another bHLH protein. Interacts with ARNT; forms a heterodimer that binds core DNA sequence 5'-[AG]CGTG-3' within the hypoxia response element (HRE) leading to a transcriptional repressor on its target gene TH. In terms of tissue distribution, expressed in brain in inhibitory interneurons. Also found in spinal cord.

It is found in the nucleus. Its function is as follows. May control regulatory pathways relevant to schizophrenia and to psychotic illness. May play a role in late central nervous system development by modulating EPO expression in response to cellular oxygen level. Forms a heterodimer that binds core DNA sequence 5'-TACGTG-3' within the hypoxia response element (HRE) leading to transcriptional repression on its target gene TH. The chain is Neuronal PAS domain-containing protein 1 (Npas1) from Mus musculus (Mouse).